The following is a 441-amino-acid chain: ATP-dependent protease ATPase subunit HslU (441 aa).

ATP is bound by residues Ile-18, 60–65 (GVGKTE), Asp-254, Glu-319, and Arg-391.

It belongs to the ClpX chaperone family. HslU subfamily. In terms of assembly, a double ring-shaped homohexamer of HslV is capped on each side by a ring-shaped HslU homohexamer. The assembly of the HslU/HslV complex is dependent on binding of ATP.

The protein localises to the cytoplasm. In terms of biological role, ATPase subunit of a proteasome-like degradation complex; this subunit has chaperone activity. The binding of ATP and its subsequent hydrolysis by HslU are essential for unfolding of protein substrates subsequently hydrolyzed by HslV. HslU recognizes the N-terminal part of its protein substrates and unfolds these before they are guided to HslV for hydrolysis. The sequence is that of ATP-dependent protease ATPase subunit HslU from Shewanella woodyi (strain ATCC 51908 / MS32).